Reading from the N-terminus, the 539-residue chain is Protein ENTREP2 (539 aa).

The next 4 membrane-spanning stretches (helical) occupy residues I31 to F51, S65 to W85, L89 to A109, and L176 to A196. A disordered region spans residues V301–V481. The segment covering P306–F331 has biased composition (polar residues). Low complexity predominate over residues G347–A365. Positions S395–M408 are enriched in polar residues.

It belongs to the ENTREP family.

The protein resides in the membrane. The polypeptide is Protein ENTREP2 (Homo sapiens (Human)).